The chain runs to 667 residues: UvrABC system protein C (667 aa).

The region spanning A43 to V122 is the GIY-YIG domain. The region spanning Q232 to L267 is the UVR domain.

This sequence belongs to the UvrC family. In terms of assembly, interacts with UvrB in an incision complex.

It localises to the cytoplasm. Its function is as follows. The UvrABC repair system catalyzes the recognition and processing of DNA lesions. UvrC both incises the 5' and 3' sides of the lesion. The N-terminal half is responsible for the 3' incision and the C-terminal half is responsible for the 5' incision. The sequence is that of UvrABC system protein C from Prochlorococcus marinus (strain MIT 9313).